The sequence spans 225 residues: UPF0758 protein BCB4264_A4572 (225 aa).

Residues 103–225 (SIRSPEDCAK…FVSLKEKGHI (123 aa)) enclose the MPN domain. Histidine 174, histidine 176, and aspartate 187 together coordinate Zn(2+). The JAMM motif signature appears at 174–187 (HNHPSGDPTPSRED).

This sequence belongs to the UPF0758 family.

In Bacillus cereus (strain B4264), this protein is UPF0758 protein BCB4264_A4572.